An 817-amino-acid polypeptide reads, in one-letter code: Neurabin-2 (817 aa).

Actin-binding stretches follow at residues 1 to 154 and 164 to 283; these read MMKT…FERS and EAAA…QHRV. Residues 1-165 are disordered; the sequence is MMKTEPRGPG…PAAAGGDKEA (165 aa). 2 positions are modified to phosphoserine: S15 and S17. Basic residues predominate over residues 44–58; the sequence is GAHHKKYGSNVHRIK. 3 positions are modified to phosphoserine: S94, S100, and S116. The interval 100-371 is interaction with D(2) dopamine receptor; that stretch reads SLNENVDHSA…PERGVGNGRA (272 aa). The span at 131–141 shows a compositional bias: pro residues; that stretch reads SAQPAPPPHPP. The tract at residues 169–255 is interaction with ADRA2A, ADRA2B and ADRA2C; sequence RLLRQERAGL…KRSRVFQPPP (87 aa). At S192 the chain carries Phosphoserine. Residue T193 is modified to Phosphothreonine. The residue at position 205 (S205) is a Phosphoserine. T207 carries the phosphothreonine modification. The disordered stretch occupies residues 216 to 447; sequence EKADSRTGLH…SEEEDPAPSR (232 aa). The segment covering 252 to 261 has biased composition (pro residues); it reads QPPPPPPPAP. A compositionally biased stretch (basic and acidic residues) spans 291 to 302; it reads KPREVRKIKPVE. Residues 333 to 342 are compositionally biased toward low complexity; the sequence is STVATAASPA. Over residues 344-356 the composition is skewed to basic and acidic residues; sequence EEPKAQAAPEKEA. Over residues 410-425 the composition is skewed to acidic residues; the sequence is LEEDDEDDEEDGEPPY. Residues 417-494 form an interaction with protein phosphatase 1 region; it reads DEEDGEPPYE…LEKRVERLEL (78 aa). At S438 the chain carries Phosphoserine. Residues 447-451 carry the PP1-binding motif motif; it reads RKIHF. The segment at 480–525 is interaction with RGS2; it reads SAEYELEKRVERLELFPVELEKDSEGLGISIIGMGAGADMGLEKLG. In terms of domain architecture, PDZ spans 496 to 584; it reads PVELEKDSEG…RVRFMIGRER (89 aa). Residues 595 to 816 are interaction with TGN38; it reads IQQTLEQERW…NLQTLRNSNS (222 aa). S658 bears the Phosphoserine mark. Positions 671 to 788 form a coiled coil; that stretch reads FKELQIKHAV…QRRVLEESEL (118 aa).

Interacts with DCLK2. Possibly exists as a homodimer, homotrimer or a homotetramer. Interacts with F-actin, PPP1CA, neurabin-1, TGN38 and D(2) dopamine receptor. Interacts with RGS1, RGS2, RGS4, RGS19 and ADRA1B, ADRA2A, ADRA2B, ADRA2C, CDKN2A, PPP1R2, RASGFR1 and TIAM1. Interacts (via C-terminus) with SPATA13 (via C-terminal tail). Interacts with ADRA2B. Post-translationally, stimulation of D1 (but not D2) dopamine receptors induces Ser-94 phosphorylation. Dephosphorylation of Ser-94 is mediated mainly by PP1 and to a lesser extent by PP2A. Phosphorylation of spinophilin disrupts its association with F-actin, but does not affect its binding to PP1.

It localises to the cytoplasm. The protein localises to the cytoskeleton. Its subcellular location is the nucleus. It is found in the cell projection. The protein resides in the dendritic spine. It localises to the postsynaptic density. The protein localises to the synapse. Its subcellular location is the cell junction. It is found in the adherens junction. The protein resides in the cell membrane. It localises to the lamellipodium. The protein localises to the filopodium. Its subcellular location is the ruffle membrane. Functionally, seems to act as a scaffold protein in multiple signaling pathways. Modulates excitatory synaptic transmission and dendritic spine morphology. Binds to actin filaments (F-actin) and shows cross-linking activity. Binds along the sides of the F-actin. May play an important role in linking the actin cytoskeleton to the plasma membrane at the synaptic junction. Believed to target protein phosphatase 1/PP1 to dendritic spines, which are rich in F-actin, and regulates its specificity toward ion channels and other substrates, such as AMPA-type and NMDA-type glutamate receptors. Plays a role in regulation of G-protein coupled receptor signaling, including dopamine D2 receptors and alpha-adrenergic receptors. May establish a signaling complex for dopaminergic neurotransmission through D2 receptors by linking receptors downstream signaling molecules and the actin cytoskeleton. Binds to ADRA1B and RGS2 and mediates regulation of ADRA1B signaling. May confer to Rac signaling specificity by binding to both, RacGEFs and Rac effector proteins. Probably regulates p70 S6 kinase activity by forming a complex with TIAM1. Required for hepatocyte growth factor (HGF)-induced cell migration. This chain is Neurabin-2 (PPP1R9B), found in Homo sapiens (Human).